Here is a 517-residue protein sequence, read N- to C-terminus: Crotonobetaine/carnitine--CoA ligase (517 aa).

The protein belongs to the ATP-dependent AMP-binding enzyme family.

It catalyses the reaction 4-(trimethylamino)butanoate + ATP + CoA = 4-(trimethylamino)butanoyl-CoA + AMP + diphosphate. The enzyme catalyses crotonobetaine + ATP + CoA = crotonobetainyl-CoA + AMP + diphosphate. It carries out the reaction (R)-carnitine + ATP + CoA = (R)-carnitinyl-CoA + AMP + diphosphate. It functions in the pathway amine and polyamine metabolism; carnitine metabolism. Catalyzes the transfer of CoA to carnitine, generating the initial carnitinyl-CoA needed for the CaiB reaction cycle. Also has activity toward crotonobetaine and gamma-butyrobetaine. This chain is Crotonobetaine/carnitine--CoA ligase, found in Escherichia coli O6:K15:H31 (strain 536 / UPEC).